We begin with the raw amino-acid sequence, 395 residues long: Crh-like protein 5 (395 aa).

Positions 1–19 are cleaved as a signal peptide; the sequence is MYFKYTAAALAAVLPLCSA. Cysteines 25 and 32 form a disulfide. A GH16 domain is found at 45-230; the sequence is ADFTSASALD…WAGGLTDYSA (186 aa). E119 serves as the catalytic Nucleophile. The active-site Proton donor is E123. Chitin is bound by residues E123, R203, W207, and T218. Positions 271-374 are disordered; that stretch reads ISSSSSVTSS…PELSQGAAGS (104 aa). Low complexity-rich tracts occupy residues 272 to 338 and 348 to 364; these read SSSS…SNTG and GSSS…ASAT. N319 carries an N-linked (GlcNAc...) asparagine glycan. G370 carries the GPI-like-anchor amidated glycine lipid modification. Positions 371–395 are cleaved as a propeptide — removed in mature form; that stretch reads AAGSIKGSVTACALVFGAVAAVLAF.

The protein belongs to the glycosyl hydrolase 16 family. CRH1 subfamily. In terms of processing, the GPI-like anchor contains a phosphoceramide lipid group. The anchor position has not been determined.

The protein localises to the cell membrane. Its subcellular location is the secreted. It localises to the cell wall. It catalyses the reaction Random endo-hydrolysis of N-acetyl-beta-D-glucosaminide (1-&gt;4)-beta-linkages in chitin and chitodextrins.. Its function is as follows. Dual chitinase/transglycosylase that plays a role in cell wall architecture. Chitinase and transglycosylase activities are coupled. Required for the polysaccharide cross-linking at the septa and the cell wall. More specifically, transfers chitin to 1,6-beta-glucan in the cell wall. Chr5 shows acceptor substrate promiscuity and is also able to cross-link chitin to chitin. This is Crh-like protein 5 from Aspergillus fumigatus (strain ATCC MYA-4609 / CBS 101355 / FGSC A1100 / Af293) (Neosartorya fumigata).